A 206-amino-acid chain; its full sequence is Adenylyl-sulfate kinase (206 aa).

36–43 (GLSGSGKS) provides a ligand contact to ATP. The active-site Phosphoserine intermediate is Ser-110.

Belongs to the APS kinase family.

It carries out the reaction adenosine 5'-phosphosulfate + ATP = 3'-phosphoadenylyl sulfate + ADP + H(+). The protein operates within sulfur metabolism; hydrogen sulfide biosynthesis; sulfite from sulfate: step 2/3. Catalyzes the synthesis of activated sulfate. This is Adenylyl-sulfate kinase (cysC) from Buchnera aphidicola subsp. Acyrthosiphon pisum (strain APS) (Acyrthosiphon pisum symbiotic bacterium).